Reading from the N-terminus, the 468-residue chain is WD repeat-containing protein 55 homolog (468 aa).

Residues 1-107 (MRNFNSPKFG…VPKRVIDDYD (107 aa)) are disordered. Acidic residues-rich tracts occupy residues 15–26 (DDSDDDDFDSGT), 41–58 (PITE…EYNP), and 67–91 (SDDE…DGED). WD repeat units follow at residues 134–173 (KTED…CTIV), 178–217 (THTK…LKRF), 221–259 (AHEE…PVFK), 262–301 (EVED…MYVQ), 304–343 (PYEE…YHCD), and 388–427 (QHSL…EFDD).

This sequence belongs to the WD repeat WDR55 family.

This Aedes aegypti (Yellowfever mosquito) protein is WD repeat-containing protein 55 homolog.